An 886-amino-acid polypeptide reads, in one-letter code: Peptidyl-lysine N-acetyltransferase Pat (886 aa).

The 37-residue stretch at 487-523 (QPILHAYGLHTLPTWIASDSAEAVHIAEQIGYPVALK) folds into the ATP-grasp domain. An ATP-binding site is contributed by 513–524 (AEQIGYPVALKL). Positions 726–881 (CLFRPILPED…GIVGLTLNLA (156 aa)) constitute an N-acetyltransferase domain.

It in the N-terminal section; belongs to the acetate CoA ligase alpha subunit family. This sequence in the central section; belongs to the acetate CoA ligase beta subunit family. As to quaternary structure, monomer in the absence of acetyl-CoA. Oligomerizes to a tetrameric form in the presence of acetyl-CoA.

The enzyme catalyses L-lysyl-[protein] + acetyl-CoA = N(6)-acetyl-L-lysyl-[protein] + CoA + H(+). Exhibits positive cooperativity. It may be the result of acetyl-CoA binding to two distinct sites, or the result of subunit interactions. Functionally, acetylates and inactivates the acetyl-CoA synthase (Acs). Can also acetylate other central metabolic enzymes in response to environmental changes. This chain is Peptidyl-lysine N-acetyltransferase Pat (pat), found in Salmonella typhimurium (strain LT2 / SGSC1412 / ATCC 700720).